The sequence spans 103 residues: NADH dehydrogenase [ubiquinone] 1 beta subcomplex subunit 7 (103 aa).

The CHCH domain maps to Arg-27 to Arg-69. 2 consecutive short sequence motifs (cx9C motif) follow at residues Cys-30–Cys-40 and Cys-51–Cys-61. Cystine bridges form between Cys-30–Cys-61 and Cys-40–Cys-51.

This sequence belongs to the complex I NDUFB7 subunit family. As to quaternary structure, complex I is composed of at least 49 different subunits.

It localises to the mitochondrion. It is found in the mitochondrion inner membrane. The protein resides in the mitochondrion intermembrane space. Functionally, accessory subunit of the mitochondrial membrane respiratory chain NADH dehydrogenase (Complex I), that is believed not to be involved in catalysis. Complex I functions in the transfer of electrons from NADH to the respiratory chain. The immediate electron acceptor for the enzyme is believed to be ubiquinone. The sequence is that of NADH dehydrogenase [ubiquinone] 1 beta subcomplex subunit 7 from Arabidopsis thaliana (Mouse-ear cress).